A 147-amino-acid chain; its full sequence is Bis(5'-nucleosyl)-tetraphosphatase [asymmetrical] (147 aa).

In terms of domain architecture, Nudix hydrolase spans 1–139 (MALRACGLII…EMKAALQEGH (139 aa)). Alanine 2 carries the N-acetylalanine modification. A Nudix box motif is present at residues 43 to 64 (GHVEPGEDDLETALRETQEEAG).

The protein belongs to the Nudix hydrolase family. It depends on a divalent metal cation as a cofactor.

It carries out the reaction P(1),P(4)-bis(5'-guanosyl) tetraphosphate + H2O = GMP + GTP + 2 H(+). The enzyme catalyses a 5'-end CoA-ribonucleoside in mRNA + H2O = a 5'-end phospho-adenosine-phospho-ribonucleoside in mRNA + (R)-4'-phosphopantetheine + 2 H(+). The catalysed reaction is a 5'-end FAD-phospho-ribonucleoside in mRNA + H2O = a 5'-end phospho-adenosine-phospho-ribonucleoside in mRNA + FMN + 2 H(+). Functionally, catalyzes the asymmetric hydrolysis of diadenosine 5',5'''-P1,P4-tetraphosphate (Ap4A) to yield AMP and ATP. Exhibits decapping activity towards FAD-capped RNAs and dpCoA-capped RNAs in vitro. The protein is Bis(5'-nucleosyl)-tetraphosphatase [asymmetrical] (NUDT2) of Homo sapiens (Human).